The following is a 146-amino-acid chain: VHLTDGEKNALSTAWGKVNADEVGGEALGRLLVVYPWTQRFFDSFGDLSSATAVMGNPKVKAHGKKVLDSFSNGLKHLDNLKGTFASLSELHCDKLHVDPENFRLLGNVLVVVLAHHLGKEFTPQVQAAFQKVVAGVANALAHKYH.

Position 1 is an N-acetylvaline (Val-1). A Globin domain is found at His-2 to His-146. A Phosphoserine modification is found at Ser-44. At Lys-59 the chain carries N6-acetyllysine. Heme b is bound at residue His-63. Lys-82 carries the post-translational modification N6-acetyllysine. His-92 is a binding site for heme b. An S-nitrosocysteine modification is found at Cys-93. Position 144 is an N6-acetyllysine (Lys-144).

The protein belongs to the globin family. Heterotetramer of two alpha chains and two beta chains. In terms of tissue distribution, red blood cells.

In terms of biological role, involved in oxygen transport from the lung to the various peripheral tissues. In Otospermophilus beecheyi (California ground squirrel), this protein is Hemoglobin subunit beta.